Here is a 31-residue protein sequence, read N- to C-terminus: Photosystem II reaction center protein M (31 aa).

Residues 5–25 traverse the membrane as a helical segment; sequence ILAFIATALLILVPTAFLLII.

The protein belongs to the PsbM family. In terms of assembly, PSII is composed of 1 copy each of membrane proteins PsbA, PsbB, PsbC, PsbD, PsbE, PsbF, PsbH, PsbI, PsbJ, PsbK, PsbL, PsbM, PsbT, PsbX, PsbY, PsbZ, Psb30/Ycf12, at least 3 peripheral proteins of the oxygen-evolving complex and a large number of cofactors. It forms dimeric complexes.

Its subcellular location is the plastid membrane. Its function is as follows. One of the components of the core complex of photosystem II (PSII). PSII is a light-driven water:plastoquinone oxidoreductase that uses light energy to abstract electrons from H(2)O, generating O(2) and a proton gradient subsequently used for ATP formation. It consists of a core antenna complex that captures photons, and an electron transfer chain that converts photonic excitation into a charge separation. This subunit is found at the monomer-monomer interface. In Cuscuta exaltata (Tall dodder), this protein is Photosystem II reaction center protein M.